A 457-amino-acid polypeptide reads, in one-letter code: Siroheme synthase (457 aa).

The segment at 1–204 (MDHLPIFCQL…ADEKAVNATT (204 aa)) is precorrin-2 dehydrogenase /sirohydrochlorin ferrochelatase. Residues 22–23 (DV) and 43–44 (LT) each bind NAD(+). Ser-128 carries the post-translational modification Phosphoserine. The interval 216 to 457 (GEVVLVGAGP…RDKLNWFSNY (242 aa)) is uroporphyrinogen-III C-methyltransferase. Pro-225 serves as a coordination point for S-adenosyl-L-methionine. Asp-248 (proton acceptor) is an active-site residue. Lys-270 (proton donor) is an active-site residue. Residues 301 to 303 (GGD), Ile-306, 331 to 332 (TA), Met-382, and Gly-411 each bind S-adenosyl-L-methionine.

It in the N-terminal section; belongs to the precorrin-2 dehydrogenase / sirohydrochlorin ferrochelatase family. In the C-terminal section; belongs to the precorrin methyltransferase family.

It carries out the reaction uroporphyrinogen III + 2 S-adenosyl-L-methionine = precorrin-2 + 2 S-adenosyl-L-homocysteine + H(+). The catalysed reaction is precorrin-2 + NAD(+) = sirohydrochlorin + NADH + 2 H(+). It catalyses the reaction siroheme + 2 H(+) = sirohydrochlorin + Fe(2+). It participates in cofactor biosynthesis; adenosylcobalamin biosynthesis; precorrin-2 from uroporphyrinogen III: step 1/1. The protein operates within cofactor biosynthesis; adenosylcobalamin biosynthesis; sirohydrochlorin from precorrin-2: step 1/1. It functions in the pathway porphyrin-containing compound metabolism; siroheme biosynthesis; precorrin-2 from uroporphyrinogen III: step 1/1. Its pathway is porphyrin-containing compound metabolism; siroheme biosynthesis; siroheme from sirohydrochlorin: step 1/1. It participates in porphyrin-containing compound metabolism; siroheme biosynthesis; sirohydrochlorin from precorrin-2: step 1/1. In terms of biological role, multifunctional enzyme that catalyzes the SAM-dependent methylations of uroporphyrinogen III at position C-2 and C-7 to form precorrin-2 via precorrin-1. Then it catalyzes the NAD-dependent ring dehydrogenation of precorrin-2 to yield sirohydrochlorin. Finally, it catalyzes the ferrochelation of sirohydrochlorin to yield siroheme. The sequence is that of Siroheme synthase from Salmonella dublin (strain CT_02021853).